Reading from the N-terminus, the 2517-residue chain is Cullin-9 (2517 aa).

A Glycyl lysine isopeptide (Lys-Gly) (interchain with G-Cter in ubiquitin) cross-link involves residue lysine 87. A compositionally biased stretch (polar residues) spans 276-288 (SPELGAGDQSSPC). The interval 276 to 296 (SPELGAGDQSSPCATREKSRG) is disordered. A CPH domain is found at 366–439 (RSEFSSRSGY…HWHMLEILGP (74 aa)). Residues 576-589 (SNEPSSSSTSRNHS) are compositionally biased toward low complexity. The disordered stretch occupies residues 576-639 (SNEPSSSSTS…TETPMAQSDS (64 aa)). A compositionally biased stretch (acidic residues) spans 593 to 609 (DPEEESKSEASFSEEET). The segment covering 610-630 (ESLKAKAEAPKTEAEPTKTRT) has biased composition (basic and acidic residues). A Phosphoserine modification is found at serine 976. The 180-residue stretch at 1143–1322 (PINIPFFDVF…RTCLFYTIRA (180 aa)) folds into the DOC domain. 1363-1370 (AAQALGKT) contacts ATP. Disordered stretches follow at residues 1432-1466 (VEPP…VLPS) and 1664-1685 (DEEE…AEKE). The segment covering 1433–1443 (EPPPGPSPEPS) has biased composition (pro residues). Serine 1457 carries the phosphoserine modification. Residues 1649–1691 (LFQLQRLDKLFLEQEDEEEKRLEEEEEEEEEEEAEKELFIEDP) are a coiled coil. The span at 1664–1683 (DEEEKRLEEEEEEEEEEEAE) shows a compositional bias: acidic residues. Lysine 1881 participates in a covalent cross-link: Glycyl lysine isopeptide (Lys-Gly) (interchain with G-Cter in NEDD8). The segment at 2066-2283 (RPDHCPVCVS…KDYYNCSAMV (218 aa)) is TRIAD supradomain. Residues cysteine 2070, cysteine 2073, cysteine 2088, histidine 2090, cysteine 2093, cysteine 2096, cysteine 2115, cysteine 2120, cysteine 2160, cysteine 2166, cysteine 2181, cysteine 2184, cysteine 2189, cysteine 2192, histidine 2198, cysteine 2203, cysteine 2236, and cysteine 2239 each coordinate Zn(2+). The RING-type 1 zinc-finger motif lies at 2070–2120 (CPVCVSPLGCDDDLPSLCCMHYCCKSCWNEYLTTRIEQNLVLNCTCPIADC). Residues 2140 to 2203 (SKYEKALLRG…FPEAHYPASC (64 aa)) form an IBR-type zinc finger. The segment at 2236 to 2265 (CPSCQAPIEKNEGCLHMTCAKCNHGFCWRC) adopts an RING-type 2; atypical zinc-finger fold. Cysteine 2249 is a catalytic residue. Residues cysteine 2254, cysteine 2257, cysteine 2262, cysteine 2265, histidine 2273, and cysteine 2279 each coordinate Zn(2+). Positions 2365–2385 (VEQQTENLELHTNALQILLEE) form a coiled coil. Serine 2436 carries the post-translational modification Phosphoserine. Residues 2442–2517 (WEAKGPNMPG…EEEDEDEAYD (76 aa)) are disordered. Acidic residues-rich tracts occupy residues 2461–2499 (EAEE…ENLD) and 2506–2517 (GDEEEDEDEAYD).

Belongs to the cullin family. Component of the Cul9-RING complex consisting of CUL9 and RBX1; the CUL9-RBX1 complex is a heterododecamer composed of six CUL9 and six RBX1 protomers. Interacts (via C-terminal TRIAD/RBR supradomain) with E2 ubiquitin-conjugating enzyme UBE2L3. Interacts with CUL7; the interaction with the CUL7 component of the 3M complex leads to inhibition of CUL9 activity. The CUL7-CUL9 heterodimer seems to interact specifically with TP53, likely via the CPH domain. Forms a complex with p53/TP53 in the cytoplasm of unstressed cells. Interacts with UBCH7 and UBCH8. Post-translationally, autoubiquitinated by the CUL9-RBX1 complex at Lys-87. In terms of processing, neddylated. Neddylation is mediated by E1 enzyme UBA3-NAE1 complex and E2 enzyme UBE2F. Structural rearrangment of the C-terminal TRIAD/RBR supradomain may play a role in neddylation and deneddylation. Ubiquitously expressed in all tissues with highest expression in testis brain and kidney.

The protein resides in the cytoplasm. Its function is as follows. Core component of a Cul9-RING ubiquitin-protein ligase complex composed of CUL9 and RBX1. The CUL9-RBX1 complex mediates ubiquitination and subsequent degradation of BIRC5 and is required to maintain microtubule dynamics and genome integrity. Acts downstream of the 3M complex, which inhibits the ubiquitination of BIRC5. The CUL9-RBX1 complex also mediates mono-ubiquitination of p53/TP53. Acts as a cytoplasmic anchor protein in p53/TP53-associated protein complex. Regulates the subcellular localization of p53/TP53 and its subsequent function. Ubiquitinates apurinic/apyrimidinic endodeoxyribonuclease APEX2. Ubiquitination by the CUL9-RBX1 complex is predominantly mediated by E2 ubiquitin-conjugating enzymes UBE2L3 and UBE2D2. In Homo sapiens (Human), this protein is Cullin-9 (CUL9).